The chain runs to 339 residues: Holliday junction branch migration complex subunit RuvB (339 aa).

Positions 1–180 are large ATPase domain (RuvB-L); that stretch reads MTRTITPDMT…FGVISRLEFY (180 aa). ATP is bound by residues leucine 19, arginine 20, glycine 61, lysine 64, threonine 65, threonine 66, 127 to 129, arginine 170, tyrosine 180, and arginine 217; that span reads EDF. Threonine 65 contacts Mg(2+). Residues 181 to 251 form a small ATPAse domain (RuvB-S) region; it reads TIEELAFIIT…VVQDALALLE (71 aa). The tract at residues 254 to 339 is head domain (RuvB-H); the sequence is HMGFDYMDRM…EPPQGKLFQD (86 aa). Positions 309 and 314 each coordinate DNA.

It belongs to the RuvB family. As to quaternary structure, homohexamer. Forms an RuvA(8)-RuvB(12)-Holliday junction (HJ) complex. HJ DNA is sandwiched between 2 RuvA tetramers; dsDNA enters through RuvA and exits via RuvB. An RuvB hexamer assembles on each DNA strand where it exits the tetramer. Each RuvB hexamer is contacted by two RuvA subunits (via domain III) on 2 adjacent RuvB subunits; this complex drives branch migration. In the full resolvosome a probable DNA-RuvA(4)-RuvB(12)-RuvC(2) complex forms which resolves the HJ.

The protein localises to the cytoplasm. It carries out the reaction ATP + H2O = ADP + phosphate + H(+). Functionally, the RuvA-RuvB-RuvC complex processes Holliday junction (HJ) DNA during genetic recombination and DNA repair, while the RuvA-RuvB complex plays an important role in the rescue of blocked DNA replication forks via replication fork reversal (RFR). RuvA specifically binds to HJ cruciform DNA, conferring on it an open structure. The RuvB hexamer acts as an ATP-dependent pump, pulling dsDNA into and through the RuvAB complex. RuvB forms 2 homohexamers on either side of HJ DNA bound by 1 or 2 RuvA tetramers; 4 subunits per hexamer contact DNA at a time. Coordinated motions by a converter formed by DNA-disengaged RuvB subunits stimulates ATP hydrolysis and nucleotide exchange. Immobilization of the converter enables RuvB to convert the ATP-contained energy into a lever motion, pulling 2 nucleotides of DNA out of the RuvA tetramer per ATP hydrolyzed, thus driving DNA branch migration. The RuvB motors rotate together with the DNA substrate, which together with the progressing nucleotide cycle form the mechanistic basis for DNA recombination by continuous HJ branch migration. Branch migration allows RuvC to scan DNA until it finds its consensus sequence, where it cleaves and resolves cruciform DNA. This is Holliday junction branch migration complex subunit RuvB from Geotalea daltonii (strain DSM 22248 / JCM 15807 / FRC-32) (Geobacter daltonii).